Reading from the N-terminus, the 349-residue chain is 2-oxoglutarate-Fe(II) type oxidoreductase hxnY (349 aa).

The 105-residue stretch at 178–282 (GVATMRMLHY…RYSIPFFFSG (105 aa)) folds into the Fe2OG dioxygenase domain. Fe cation contacts are provided by His205, Asp207, and His263. Arg273 serves as a coordination point for 2-oxoglutarate.

It belongs to the iron/ascorbate-dependent oxidoreductase family. The cofactor is Fe(2+).

In terms of biological role, 2-oxoglutarate-Fe(II) type oxidoreductase, part of the hnx cluster involved in the purine degradation. The nicotinate hydroxylase hnxS accepts nicotinate as a substrate and catalyzes the first step of nicotinate catabolism. The major facilitator-type transporters hxnP and hxnZ are probably involved in the uptake of nicotinate-derived metabolites, and the oxidoreductases hxnT and hxnY in the further metabolism of 6-OH nicotinic acid. This is 2-oxoglutarate-Fe(II) type oxidoreductase hxnY from Emericella nidulans (strain FGSC A4 / ATCC 38163 / CBS 112.46 / NRRL 194 / M139) (Aspergillus nidulans).